We begin with the raw amino-acid sequence, 179 residues long: Warthog protein 3 (179 aa).

Residues 1–19 (MLYHVEMFTIILLFGFSLA) form the signal peptide. Residues asparagine 52 and asparagine 147 are each glycosylated (N-linked (GlcNAc...) asparagine).

As to expression, expressed in the trinucleate pharyngeal gland cell g1, seam cells and hypodermis.

It is found in the secreted. Intercellular signal essential for a variety of patterning events during development. The sequence is that of Warthog protein 3 (wrt-3) from Caenorhabditis elegans.